A 456-amino-acid chain; its full sequence is Bifunctional protein GlmU (456 aa).

A pyrophosphorylase region spans residues 1–228; the sequence is MPQNTLNIVI…SYLAAGVNNK (228 aa). UDP-N-acetyl-alpha-D-glucosamine-binding positions include 11 to 14, Lys25, Gln75, 80 to 81, 102 to 104, Gly138, Glu153, Asn168, and Asn226; these read LAAG, GT, and YGD. Asp104 is a Mg(2+) binding site. Residue Asn226 participates in Mg(2+) binding. Residues 229–249 form a linker region; it reads LQLAELERIFQTEQAQELLKA. The interval 250–456 is N-acetyltransferase; the sequence is GVTLSDPARF…GWVRPEKDKQ (207 aa). UDP-N-acetyl-alpha-D-glucosamine contacts are provided by Arg332 and Lys350. His362 (proton acceptor) is an active-site residue. The UDP-N-acetyl-alpha-D-glucosamine site is built by Tyr365 and Asn376. Residues Ala379, 385–386, Ser404, Ala422, and Arg439 each bind acetyl-CoA; that span reads NY.

In the N-terminal section; belongs to the N-acetylglucosamine-1-phosphate uridyltransferase family. The protein in the C-terminal section; belongs to the transferase hexapeptide repeat family. As to quaternary structure, homotrimer. It depends on Mg(2+) as a cofactor.

The protein resides in the cytoplasm. It carries out the reaction alpha-D-glucosamine 1-phosphate + acetyl-CoA = N-acetyl-alpha-D-glucosamine 1-phosphate + CoA + H(+). It catalyses the reaction N-acetyl-alpha-D-glucosamine 1-phosphate + UTP + H(+) = UDP-N-acetyl-alpha-D-glucosamine + diphosphate. It functions in the pathway nucleotide-sugar biosynthesis; UDP-N-acetyl-alpha-D-glucosamine biosynthesis; N-acetyl-alpha-D-glucosamine 1-phosphate from alpha-D-glucosamine 6-phosphate (route II): step 2/2. Its pathway is nucleotide-sugar biosynthesis; UDP-N-acetyl-alpha-D-glucosamine biosynthesis; UDP-N-acetyl-alpha-D-glucosamine from N-acetyl-alpha-D-glucosamine 1-phosphate: step 1/1. The protein operates within bacterial outer membrane biogenesis; LPS lipid A biosynthesis. Functionally, catalyzes the last two sequential reactions in the de novo biosynthetic pathway for UDP-N-acetylglucosamine (UDP-GlcNAc). The C-terminal domain catalyzes the transfer of acetyl group from acetyl coenzyme A to glucosamine-1-phosphate (GlcN-1-P) to produce N-acetylglucosamine-1-phosphate (GlcNAc-1-P), which is converted into UDP-GlcNAc by the transfer of uridine 5-monophosphate (from uridine 5-triphosphate), a reaction catalyzed by the N-terminal domain. The chain is Bifunctional protein GlmU from Neisseria meningitidis serogroup C / serotype 2a (strain ATCC 700532 / DSM 15464 / FAM18).